The chain runs to 116 residues: Large ribosomal subunit protein bL17 (116 aa).

Belongs to the bacterial ribosomal protein bL17 family. In terms of assembly, part of the 50S ribosomal subunit. Contacts protein L32.

This chain is Large ribosomal subunit protein bL17, found in Prochlorococcus marinus (strain MIT 9215).